Reading from the N-terminus, the 196-residue chain is DnaA initiator-associating protein DiaA (196 aa).

The 163-residue stretch at 34-196 (LVQSLLNGNK…DNTLFPHQDD (163 aa)) folds into the SIS domain.

It belongs to the SIS family. DiaA subfamily. Homotetramer; dimer of dimers.

Required for the timely initiation of chromosomal replication via direct interactions with the DnaA initiator protein. The protein is DnaA initiator-associating protein DiaA of Enterobacter sp. (strain 638).